Consider the following 1360-residue polypeptide: KN motif and ankyrin repeat domains 1 (1360 aa).

A KN motif; Interaction with TLN1 region spans residues 30–68 (PYFVETPYGFQLDLDFVKYVDDIQKGNTIKKLNIQKRRK). An Important for binding to TLN1 motif is present at residues 41–44 (LDLD). The Nuclear export signal 1 (NES 1) signature appears at 43–52 (LDFVKYVDDI). The Nuclear localization signal 1 (NLS 1) signature appears at 65–68 (KRRK). The segment at 66-103 (RRKPSVPCPEVRAIPGHQGVWTSTESLSSSNSDDSKQC) is disordered. Residues 88 to 103 (STESLSSSNSDDSKQC) are compositionally biased toward low complexity. The Nuclear export signal 2 (NES 2) signature appears at 125 to 134 (LETSPTFAVS). Ser-186 bears the Phosphoserine mark. The tract at residues 221–253 (DYNSYVPAAPTTSSMGSSVRHSPLSSGISTPVT) is disordered. Positions 230-253 (PTTSSMGSSVRHSPLSSGISTPVT) are enriched in polar residues. The segment at 244–339 (LSSGISTPVT…SQLELLARAR (96 aa)) is interaction with PPFIBP1. Residues 260-311 (LQHIREQMAIALKRLKELEEQVRTIPVLQVKISVLQEEKRQLASQLKSQRAS) are a coiled coil. Position 325 is a phosphoserine (Ser-325). 2 coiled-coil regions span residues 367–394 (FRQLTADMQALERKIQDSSCEVASELRE) and 453–487 (ITEADKEIELQQQTIEALKEKIYRLEVQLKETTHD). A Nuclear export signal 3 (NES 3) motif is present at residues 618 to 627 (LTLLKTNLNL). Disordered stretches follow at residues 929–954 (SQPEVEAETAEGKHSRGHEQFPMQGS) and 983–1053 (IMKK…DTRG). 2 stretches are compositionally biased toward basic and acidic residues: residues 938-947 (AEGKHSRGHE) and 985-995 (KKSDGNKDSNG). Residues 985–998 (KKSDGNKDSNGAKK) carry the Nuclear localization signal 2 (NLS 2) motif. Over residues 1010–1025 (ETTSSDESSSDGSSSS) the composition is skewed to low complexity. A compositionally biased stretch (acidic residues) spans 1026–1047 (ESDDECDTIGYPPEEEEEEEEK). An interaction with KIF21A region spans residues 1081-1360 (EPEKEEIRER…PGPTHRGSFD (280 aa)). The stretch at 1117–1154 (KDMRICLNTLQHDWFRVSSQKSAVPAMVGDYIAAFEAV) is one ANK 0; degenerate repeat. 5 ANK repeats span residues 1169–1199 (NGNTALHYSVSHSNFQIVKLLLDADVCNVDH), 1203–1236 (AGYTPIMLAALAAVEAEKDMQVVEELFSCGDVNA), 1241–1270 (AGQTALMLAVSHGRIDMVKGLLACGADVNI), 1274–1306 (EGSTALMCASEHGHVEIVKLLLAQPGCNGHLED), and 1308–1337 (DGSTALSIALEAGHKDIAVLLYAHLNFSKA). The tract at residues 1337 to 1360 (AQSPSTPRLGRKTSPGPTHRGSFD) is disordered.

Part of a cortical microtubule stabilization complex (CMSC) composed of KANK1, PPFIA1, PPFIBP1, ERC1/ELKS, PHLDB2/LL5beta, CLASPs, KIF21A and possibly additional interactors; within CMSCs KANK1 and PHLDB2/LL5beta appear to be the core components for targeting of microtubule-binding proteins KIF21A and CLASPs, whereas PPFIA1, PPFIBP1 and ERC1/ELKS serve as scaffolds for protein clustering. Interacts (via KN motif) with TLN1 (via R7 domain); this mediates CMSC clustering around focal adhesions. Interacts (via CC1 domain, residues 244-339) with PPFIBP1. Interacts (via ANK repeats 1-5) with KIF21A (via residues 1142-1169). Interacts with YWHAQ; the interaction requires KANK1 phosphorylation at Ser-325 and is enhanced by growth factor stimulation. Interacts with YWHAB, YWHAG, YWHAE, YWHAH, YWHAZ and SFN; the interaction requires KANK1 phosphorylation at Ser-325. Interacts with ARFGEF1; however, colocalization cannot be experimentally confirmed. Interacts with BAIAP2. Interacts with CTNNB1. Interacts (via coiled coil domain) with DAAM1 (via coiled coil domain).

The protein localises to the cytoplasm. Its subcellular location is the cell cortex. The protein resides in the cell projection. It localises to the ruffle membrane. It is found in the nucleus. In terms of biological role, adapter protein that links structural and signaling protein complexes positioned to guide microtubule and actin cytoskeleton dynamics during cell morphogenesis. At focal adhesions (FAs) rims, organizes cortical microtubule stabilizing complexes (CMSCs) and directly interacts with major FA component TLN1, forming macromolecular assemblies positioned to control microtubule-actin crosstalk at the cell edge. Recruits KIF21A in CMSCs at axonal growth cones and regulates axon guidance by suppressing microtubule growth without inducing microtubule disassembly once it reaches the cell cortex. Interacts with ARFGEF1 and participates in establishing microtubule-organizing center (MTOC) orientation and directed cell movement in wound healing. Regulates actin stress fiber formation and cell migration by inhibiting RHOA activation in response to growth factors; this function involves phosphorylation through PI3K/Akt signaling and may depend on the competitive interaction with 14-3-3 adapter proteins to sequester them from active complexes. Inhibits the formation of lamellipodia but not of filopodia; this function may depend on the competitive interaction with BAIAP2 to block its association with activated RAC1. Inhibits fibronectin-mediated cell spreading; this function is partially mediated by BAIAP2. In the nucleus, is involved in beta-catenin-dependent activation of transcription. During cell division, may regulate DAAM1-dependent RHOA activation that signals centrosome maturation and chromosomal segregation. May also be involved in contractile ring formation during cytokinesis. Potential tumor suppressor for renal cell carcinoma. This is KN motif and ankyrin repeat domains 1 from Mus musculus (Mouse).